The chain runs to 216 residues: Probable nicotinate-nucleotide adenylyltransferase (216 aa).

It belongs to the NadD family.

It catalyses the reaction nicotinate beta-D-ribonucleotide + ATP + H(+) = deamido-NAD(+) + diphosphate. The protein operates within cofactor biosynthesis; NAD(+) biosynthesis; deamido-NAD(+) from nicotinate D-ribonucleotide: step 1/1. Its function is as follows. Catalyzes the reversible adenylation of nicotinate mononucleotide (NaMN) to nicotinic acid adenine dinucleotide (NaAD). This Shewanella baltica (strain OS223) protein is Probable nicotinate-nucleotide adenylyltransferase.